Reading from the N-terminus, the 1237-residue chain is Zinc finger protein ZFAT (1237 aa).

The C2H2-type 1 zinc finger occupies 12–35 (FMCKCCNLFSPNQSELVTHVSEKH). The tract at residues 50–110 (RPLNTPENPN…GPLATEEGSR (61 aa)) is disordered. Residues 70 to 81 (MKRKRGRPKGST) show a composition bias toward basic residues. The C2H2-type 2; degenerate zinc finger occupies 116 to 141 (LECSKCCRKFSNTRQLRKHICIIVLN). A disordered region spans residues 147 to 188 (GDAGNESDLDLEKTYKEDDREKASKRPRAQKTEKVQKISGKE). Positions 156–186 (DLEKTYKEDDREKASKRPRAQKTEKVQKISG) are enriched in basic and acidic residues. C2H2-type zinc fingers lie at residues 271–293 (FTCE…LRIH), 299–321 (YKCS…LRKH), 326–349 (FACD…ERVH), 354–377 (QHCR…RDMH), 404–426 (YDCH…MLVH), 432–454 (FACE…VRKH), and 458–481 (YVCA…REVH). Cys-273, Cys-276, His-289, His-293, Cys-301, Cys-304, His-317, His-321, Cys-328, Cys-331, His-344, His-349, Cys-356, Cys-359, His-372, His-377, Cys-406, Cys-409, His-422, and His-426 together coordinate Zn(2+). Zn(2+) contacts are provided by Cys-460, Cys-463, His-476, and His-481. 2 disordered regions span residues 551–576 (VPGD…LSPC) and 601–671 (SDTS…CLRA). The span at 565-574 (TPQSESSSLS) shows a compositional bias: polar residues. Positions 601-617 (SDTSSAEPPAAAEATSD) are enriched in low complexity. C2H2-type zinc fingers lie at residues 737-759 (LECE…VRTH), 765-788 (YYCS…IQKH), 793-817 (LKCP…LKVH), and 825-848 (YSCP…KTNH). Zn(2+) is bound by residues Cys-767, Cys-770, His-783, His-788, Cys-795, Cys-800, His-813, His-817, Cys-827, Cys-830, His-843, His-848, Cys-877, Cys-880, His-894, His-898, Cys-906, Cys-909, His-922, His-926, Cys-934, Cys-937, His-950, and Leu-953. The C2H2-type 14; degenerate zinc-finger motif lies at 875 to 898 (MKCPYCDFYFMKNGSDLQRHIWAH). 5 C2H2-type zinc fingers span residues 904–926 (FKCS…MNRH), 932–954 (HLCD…KLLH), 961–983 (FKCT…MEQH), 989–1012 (FRCA…NRKH), and 1036–1059 (LKCP…KNKH).

As to expression, detected in spleen and thymus but not in liver, muscle, heart, kidney, brain, bone marrow or pancreas. Expressed in CD19+, CD4+ and CD8+ lymphocytes but not in CD11b+ lymphocytes or peritoneal macrophages (at protein level).

The protein resides in the nucleus. Its subcellular location is the cytoplasm. It is found in the cytosol. Its function is as follows. May be involved in transcriptional regulation. Overexpression causes down-regulation of a number of genes involved in the immune response. Some genes are also up-regulated. The sequence is that of Zinc finger protein ZFAT (Zfat) from Mus musculus (Mouse).